The chain runs to 184 residues: Large ribosomal subunit protein uL5 (184 aa).

The protein belongs to the universal ribosomal protein uL5 family. Part of the 50S ribosomal subunit; part of the 5S rRNA/L5/L18/L25 subcomplex. Contacts the 5S rRNA and the P site tRNA. Forms a bridge to the 30S subunit in the 70S ribosome.

Functionally, this is one of the proteins that bind and probably mediate the attachment of the 5S RNA into the large ribosomal subunit, where it forms part of the central protuberance. In the 70S ribosome it contacts protein S13 of the 30S subunit (bridge B1b), connecting the 2 subunits; this bridge is implicated in subunit movement. Contacts the P site tRNA; the 5S rRNA and some of its associated proteins might help stabilize positioning of ribosome-bound tRNAs. This is Large ribosomal subunit protein uL5 from Corynebacterium kroppenstedtii (strain DSM 44385 / JCM 11950 / CIP 105744 / CCUG 35717).